We begin with the raw amino-acid sequence, 317 residues long: Beta-ketoacyl-[acyl-carrier-protein] synthase III (317 aa).

Residues C112 and H244 contribute to the active site. The interval 245 to 249 (QANIR) is ACP-binding. The active site involves N274.

Belongs to the thiolase-like superfamily. FabH family. Homodimer.

It is found in the cytoplasm. The enzyme catalyses malonyl-[ACP] + acetyl-CoA + H(+) = 3-oxobutanoyl-[ACP] + CO2 + CoA. The protein operates within lipid metabolism; fatty acid biosynthesis. Its function is as follows. Catalyzes the condensation reaction of fatty acid synthesis by the addition to an acyl acceptor of two carbons from malonyl-ACP. Catalyzes the first condensation reaction which initiates fatty acid synthesis and may therefore play a role in governing the total rate of fatty acid production. Possesses both acetoacetyl-ACP synthase and acetyl transacylase activities. Its substrate specificity determines the biosynthesis of branched-chain and/or straight-chain of fatty acids. This Rickettsia typhi (strain ATCC VR-144 / Wilmington) protein is Beta-ketoacyl-[acyl-carrier-protein] synthase III.